A 73-amino-acid polypeptide reads, in one-letter code: Translational regulator CsrA (73 aa).

The segment at 54 to 73 is disordered; the sequence is ENRAASDSPWSPNSLPQLPV. Residues 61-73 show a composition bias toward polar residues; the sequence is SPWSPNSLPQLPV.

Belongs to the CsrA/RsmA family. In terms of assembly, homodimer; the beta-strands of each monomer intercalate to form a hydrophobic core, while the alpha-helices form wings that extend away from the core.

It is found in the cytoplasm. A translational regulator that binds mRNA to regulate translation initiation and/or mRNA stability. Usually binds in the 5'-UTR at or near the Shine-Dalgarno sequence preventing ribosome-binding, thus repressing translation. Its main target seems to be the major flagellin gene, while its function is anatagonized by FliW. The chain is Translational regulator CsrA from Treponema pallidum (strain Nichols).